Consider the following 282-residue polypeptide: 4-hydroxybenzoate octaprenyltransferase (282 aa).

Transmembrane regions (helical) follow at residues 17-37 (IGIL…NQGF), 40-60 (IDLL…GCVI), 90-110 (AFIL…KLPI), 113-133 (FYFA…KRFL), 135-155 (APQL…FIAS), 163-183 (FIVL…MYAM), 207-227 (LIIA…AINK), 231-251 (WFFY…LKLI), and 262-282 (AFLV…LALI).

Belongs to the UbiA prenyltransferase family. Requires Mg(2+) as cofactor.

It is found in the cell inner membrane. The enzyme catalyses all-trans-octaprenyl diphosphate + 4-hydroxybenzoate = 4-hydroxy-3-(all-trans-octaprenyl)benzoate + diphosphate. It functions in the pathway cofactor biosynthesis; ubiquinone biosynthesis. Its function is as follows. Catalyzes the prenylation of para-hydroxybenzoate (PHB) with an all-trans polyprenyl group. Mediates the second step in the final reaction sequence of ubiquinone-8 (UQ-8) biosynthesis, which is the condensation of the polyisoprenoid side chain with PHB, generating the first membrane-bound Q intermediate 3-octaprenyl-4-hydroxybenzoate. This is 4-hydroxybenzoate octaprenyltransferase from Legionella pneumophila (strain Corby).